A 526-amino-acid polypeptide reads, in one-letter code: Tyrosine 2,3-aminomutase (526 aa).

The active-site Proton donor/acceptor is the Y41. Position 71 (H71) interacts with substrate. Positions 130–132 (ASG) form a cross-link, 5-imidazolinone (Ala-Gly). S131 bears the 2,3-didehydroalanine (Ser) mark. Positions 183 and 288 each coordinate substrate.

The protein belongs to the TAL/TAM family. In terms of assembly, homotetramer; dimer of dimers. In terms of processing, contains an active site 4-methylidene-imidazol-5-one (MIO), which is formed autocatalytically by cyclization and dehydration of residues Ala-Ser-Gly.

It catalyses the reaction L-tyrosine = 3-amino-3-(4-hydroxyphenyl)propanoate. The catalysed reaction is L-tyrosine = (E)-4-coumarate + NH4(+). Has aminomutase and, to a much lesser extent, ammonia-lyase activity. Primarily, catalyzes the rearrangement of L-tyrosine to S-beta-tyrosine, which is probably incorporated into secondary metabolite myxovalargin. The aminomutase activity exclusively produces S-beta-tyrosine. This chain is Tyrosine 2,3-aminomutase, found in Myxococcus fulvus.